A 45-amino-acid chain; its full sequence is Photosystem II reaction center protein K (45 aa).

Positions 1 to 8 (MEAVFLLA) are excised as a propeptide. Residues 24-44 (LPVIPVFFLALAFVWQAAVGF) form a helical membrane-spanning segment.

Belongs to the PsbK family. PSII is composed of 1 copy each of membrane proteins PsbA, PsbB, PsbC, PsbD, PsbE, PsbF, PsbH, PsbI, PsbJ, PsbK, PsbL, PsbM, PsbT, PsbX, PsbY, PsbZ, Psb30/Ycf12, peripheral proteins PsbO, CyanoQ (PsbQ), PsbU, PsbV and a large number of cofactors. It forms dimeric complexes.

The protein resides in the cellular thylakoid membrane. In terms of biological role, one of the components of the core complex of photosystem II (PSII). PSII is a light-driven water:plastoquinone oxidoreductase that uses light energy to abstract electrons from H(2)O, generating O(2) and a proton gradient subsequently used for ATP formation. It consists of a core antenna complex that captures photons, and an electron transfer chain that converts photonic excitation into a charge separation. This is Photosystem II reaction center protein K from Crocosphaera subtropica (strain ATCC 51142 / BH68) (Cyanothece sp. (strain ATCC 51142)).